The chain runs to 467 residues: ATP synthase subunit beta (467 aa).

152–159 (GGAGVGKT) serves as a coordination point for ATP.

This sequence belongs to the ATPase alpha/beta chains family. F-type ATPases have 2 components, CF(1) - the catalytic core - and CF(0) - the membrane proton channel. CF(1) has five subunits: alpha(3), beta(3), gamma(1), delta(1), epsilon(1). CF(0) has three main subunits: a(1), b(2) and c(9-12). The alpha and beta chains form an alternating ring which encloses part of the gamma chain. CF(1) is attached to CF(0) by a central stalk formed by the gamma and epsilon chains, while a peripheral stalk is formed by the delta and b chains.

The protein localises to the cell inner membrane. The enzyme catalyses ATP + H2O + 4 H(+)(in) = ADP + phosphate + 5 H(+)(out). Its function is as follows. Produces ATP from ADP in the presence of a proton gradient across the membrane. The catalytic sites are hosted primarily by the beta subunits. This Wolinella succinogenes (strain ATCC 29543 / DSM 1740 / CCUG 13145 / JCM 31913 / LMG 7466 / NCTC 11488 / FDC 602W) (Vibrio succinogenes) protein is ATP synthase subunit beta.